The sequence spans 67 residues: MPQLDTSTWFIMIFSMFLTLFILFQLKISNHYYPENPMTKSAKIAGQHNPWENKWTKIYSLLSLPPQ.

The helical transmembrane segment at 8–24 (TWFIMIFSMFLTLFILF) threads the bilayer. An N6-acetyllysine; alternate modification is found at lysine 54. Lysine 54 carries the post-translational modification N6-succinyllysine; alternate. An N6-acetyllysine modification is found at lysine 57.

Belongs to the ATPase protein 8 family. Component of the ATP synthase complex composed at least of ATP5F1A/subunit alpha, ATP5F1B/subunit beta, ATP5MC1/subunit c (homooctomer), MT-ATP6/subunit a, MT-ATP8/subunit 8, ATP5ME/subunit e, ATP5MF/subunit f, ATP5MG/subunit g, ATP5MK/subunit k, ATP5MJ/subunit j, ATP5F1C/subunit gamma, ATP5F1D/subunit delta, ATP5F1E/subunit epsilon, ATP5PF/subunit F6, ATP5PB/subunit b, ATP5PD/subunit d, ATP5PO/subunit OSCP. ATP synthase complex consists of a soluble F(1) head domain (subunits alpha(3) and beta(3)) - the catalytic core - and a membrane F(0) domain - the membrane proton channel (subunits c, a, 8, e, f, g, k and j). These two domains are linked by a central stalk (subunits gamma, delta, and epsilon) rotating inside the F1 region and a stationary peripheral stalk (subunits F6, b, d, and OSCP). Interacts with PRICKLE3.

It localises to the mitochondrion membrane. Functionally, subunit 8, of the mitochondrial membrane ATP synthase complex (F(1)F(0) ATP synthase or Complex V) that produces ATP from ADP in the presence of a proton gradient across the membrane which is generated by electron transport complexes of the respiratory chain. ATP synthase complex consist of a soluble F(1) head domain - the catalytic core - and a membrane F(1) domain - the membrane proton channel. These two domains are linked by a central stalk rotating inside the F(1) region and a stationary peripheral stalk. During catalysis, ATP synthesis in the catalytic domain of F(1) is coupled via a rotary mechanism of the central stalk subunits to proton translocation. In vivo, can only synthesize ATP although its ATP hydrolase activity can be activated artificially in vitro. Part of the complex F(0) domain. The chain is ATP synthase F(0) complex subunit 8 from Canis lupus familiaris (Dog).